Reading from the N-terminus, the 154-residue chain is Myoglobin (154 aa).

The region spanning 2–148 (GLSDGEWQSV…FRNDIAAKYK (147 aa)) is the Globin domain. Position 4 is a phosphoserine (serine 4). Residue histidine 65 coordinates nitrite. Histidine 65 lines the O2 pocket. At threonine 68 the chain carries Phosphothreonine. Histidine 94 serves as a coordination point for heme b.

Belongs to the globin family. In terms of assembly, monomeric.

The protein localises to the cytoplasm. The protein resides in the sarcoplasm. The catalysed reaction is Fe(III)-heme b-[protein] + nitric oxide + H2O = Fe(II)-heme b-[protein] + nitrite + 2 H(+). It catalyses the reaction H2O2 + AH2 = A + 2 H2O. Its function is as follows. Monomeric heme protein which primary function is to store oxygen and facilitate its diffusion within muscle tissues. Reversibly binds oxygen through a pentacoordinated heme iron and enables its timely and efficient release as needed during periods of heightened demand. Depending on the oxidative conditions of tissues and cells, and in addition to its ability to bind oxygen, it also has a nitrite reductase activity whereby it regulates the production of bioactive nitric oxide. Under stress conditions, like hypoxia and anoxia, it also protects cells against reactive oxygen species thanks to its pseudoperoxidase activity. The protein is Myoglobin (MB) of Perodicticus potto edwarsi (Potto).